We begin with the raw amino-acid sequence, 177 residues long: Putative acetyltransferase FG08082 (177 aa).

In terms of domain architecture, N-acetyltransferase spans 81–174; it reads EEWEQVGLVR…VSIAMVEGPG (94 aa).

Belongs to the acetyltransferase family.

It participates in mycotoxin biosynthesis. Its function is as follows. Putative acetyltransferase; part of the gene cluster that mediates the biosynthesis of butenolide, a mycotoxin that shows antibiotic activity but does not seem to play a major role in the spread of head blight in wheat. Butenolide is derived from glutamic acid via a 4-acetamido-2-butenoic acid intermediate. The predicted function of the NADH:flavin oxidoreductase FG08077, the cytochrome P450 monooxygenase FG08079, the decarboxylase FG08083, and the putative acetyltransferase FG08082 are consistent with this pathway, however, the respective activities of the butelonide biosynthesis cluster enzymes have still to be experimentally determined. This Gibberella zeae (strain ATCC MYA-4620 / CBS 123657 / FGSC 9075 / NRRL 31084 / PH-1) (Wheat head blight fungus) protein is Putative acetyltransferase FG08082.